Reading from the N-terminus, the 359-residue chain is N-acetyl-gamma-glutamyl-phosphate reductase (359 aa).

Cys-162 is a catalytic residue.

It belongs to the NAGSA dehydrogenase family. Type 1 subfamily.

Its subcellular location is the cytoplasm. The catalysed reaction is N-acetyl-L-glutamate 5-semialdehyde + phosphate + NADP(+) = N-acetyl-L-glutamyl 5-phosphate + NADPH + H(+). It functions in the pathway amino-acid biosynthesis; L-arginine biosynthesis; N(2)-acetyl-L-ornithine from L-glutamate: step 3/4. In terms of biological role, catalyzes the NADPH-dependent reduction of N-acetyl-5-glutamyl phosphate to yield N-acetyl-L-glutamate 5-semialdehyde. In Prochlorococcus marinus (strain NATL1A), this protein is N-acetyl-gamma-glutamyl-phosphate reductase.